We begin with the raw amino-acid sequence, 691 residues long: Protein phosphatase 1 regulatory subunit 37 (691 aa).

The segment at 1-43 (MEIAPQEAPPVPGADGDIEEAPAEAGSPSPASPPADGRLKAAA) is disordered. Ser50 and Ser56 each carry phosphoserine. 5 LRR repeats span residues 220–240 (SLAV…MLLA), 248–269 (NLRE…AQLG), 277–297 (SLQI…AYIC), 306–326 (GLVT…AFLG), and 334–354 (SLET…RHLK). Positions 460–662 (EREEKEQPPQ…PEVKGGSCGL (203 aa)) are disordered. The span at 468-481 (PQLSASMPETTATE) shows a compositional bias: polar residues. A compositionally biased stretch (acidic residues) spans 505–523 (SDSDSDSDGEEEEEEEGER). A Phosphoserine modification is found at Ser561. 2 stretches are compositionally biased toward pro residues: residues 584–605 (PASP…PSLP) and 620–634 (PQPP…PPLP).

This sequence belongs to the PPP1R37 family. In terms of assembly, interacts with PPP1CA.

Its function is as follows. Inhibits phosphatase activity of protein phosphatase 1 (PP1) complexes. The sequence is that of Protein phosphatase 1 regulatory subunit 37 (PPP1R37) from Homo sapiens (Human).